We begin with the raw amino-acid sequence, 385 residues long: Nod factor hydrolase protein 1 (385 aa).

The signal sequence occupies residues 1–21 (MANFLKLKQFLTLVLILLALA). Positions 36 to 385 (RVKGIYWIEN…TASKAWRPES (350 aa)) constitute a GH18 domain. 2 N-linked (GlcNAc...) asparagine glycosylation sites follow: Asn115 and Asn134. Glu153 functions as the Proton donor in the catalytic mechanism. 2 N-linked (GlcNAc...) asparagine glycosylation sites follow: Asn233 and Asn247.

The protein belongs to the glycosyl hydrolase 18 family. Chitinase class V subfamily.

Its function is as follows. Symbiotic enzyme that hydrolytically inactivates Nod factors (NFs) with a C16:2 acyl chain produced by the microsymbiont Sinorhizobium meliloti. NFs are lipo-chitooligosaccharide signaling molecules produced by nitrogen-fixing rhizobia to initiate nodulation (symbiosis) on the roots of legumes. Controls NF hydrolysis at the stage of root hair infection. Involved in the regulation of growth and branching of mature nodules. Modulates NF levels and signaling to complete transition of infected nodules to functional nitrogen-fixing organs. Lacks chitinase activity in vitro toward glycol chitin, carboxymethyl-chitin, colloidal chitin, and the chitin oligosaccharides (N-acetylglucosamine) (GlcNAc)6 and (GlcNAc)5. This Medicago truncatula (Barrel medic) protein is Nod factor hydrolase protein 1.